Consider the following 127-residue polypeptide: LIM domain-containing protein 2 (127 aa).

Position 1 is an N-acetylmethionine (Met1). A disordered region spans residues Met1–Val24. The LIM zinc-binding domain maps to Glu38–Ser98. Positions 40, 43, 61, 64, 67, 70, 88, and 91 each coordinate Zn(2+).

In terms of assembly, interacts with ILK.

It localises to the cytoplasm. Its subcellular location is the nucleus. Functionally, acts as an activator of the protein-kinase ILK, thereby regulating cell motility. The polypeptide is LIM domain-containing protein 2 (Homo sapiens (Human)).